The chain runs to 587 residues: Glucosylglycerate phosphorylase (587 aa).

Aspartate 236 acts as the Nucleophile in catalysis.

The protein belongs to the glycosyl hydrolase 13 family. Glucosylglycerate phosphorylase subfamily.

The catalysed reaction is (2R)-2-O-(alpha-D-glucopyranosyl)-glycerate + phosphate = (R)-glycerate + alpha-D-glucose 1-phosphate. Functionally, catalyzes the reversible phosphorolysis of glucosylglycerate into alpha-D-glucose 1-phosphate (Glc1P) and D-glycerate. May be a regulator of intracellular levels of glucosylglycerate, a compatible solute that primarily protects organisms facing salt stress and very specific nutritional constraints. Cannot catalyze the phosphorolysis of sucrose. The chain is Glucosylglycerate phosphorylase from Spirochaeta thermophila (strain ATCC 700085 / DSM 6578 / Z-1203).